A 248-amino-acid chain; its full sequence is Secreted and transmembrane protein 1 (248 aa).

The first 28 residues, 1-28 (MQTCPLAFPGHVSQALGTLLFLAASLSA), serve as a signal peptide directing secretion. Residues 29–145 (QNEGWDSPIC…AEPQSAPDTG (117 aa)) are Extracellular-facing. A disulfide bond links Cys38 and Cys55. N-linked (GlcNAc...) asparagine glycosylation occurs at Asn56. Residues 146–166 (FWPVPAVVTAVFILLVALVMF) form a helical membrane-spanning segment. Residues 167–248 (AWYRCRCSQQ…QPLFPYAADP (82 aa)) are Cytoplasmic-facing.

This sequence belongs to the SECTM family. Interacts with CD7. As to expression, detected at the highest levels in peripheral blood leukocytes and breast cancer cell lines. Found in leukocytes of the myeloid lineage, with the strongest expression observed in granulocytes and no detectable expression in lymphocytes. Expressed in thymic epithelial cells and fibroblasts.

The protein resides in the cell membrane. Its subcellular location is the secreted. Its function is as follows. May be involved in thymocyte signaling. The chain is Secreted and transmembrane protein 1 (SECTM1) from Homo sapiens (Human).